Here is a 635-residue protein sequence, read N- to C-terminus: DNA mismatch repair protein MutL (635 aa).

The disordered stretch occupies residues Gly359–Tyr399. Residues Ala364 to Ala377 show a composition bias toward low complexity. A compositionally biased stretch (basic and acidic residues) spans Val378–Tyr399.

Belongs to the DNA mismatch repair MutL/HexB family.

This protein is involved in the repair of mismatches in DNA. It is required for dam-dependent methyl-directed DNA mismatch repair. May act as a 'molecular matchmaker', a protein that promotes the formation of a stable complex between two or more DNA-binding proteins in an ATP-dependent manner without itself being part of a final effector complex. The sequence is that of DNA mismatch repair protein MutL from Yersinia pestis bv. Antiqua (strain Antiqua).